The chain runs to 213 residues: Amelogenin, X isoform (213 aa).

An N-terminal signal peptide occupies residues 1–16 (MGTWILFACLLGAAFS). S32 bears the Phosphoserine mark. 2 stretches are compositionally biased toward low complexity: residues 96-105 (VPQQPMMPVP) and 114-160 (QHHQ…QPLQ). Positions 96–213 (VPQQPMMPVP…TDKTKREEVD (118 aa)) are disordered. Over residues 161–194 (PLQPQPPVHPIQPLPPQPPLPPIFPMQPLPPMLP) the composition is skewed to pro residues.

It belongs to the amelogenin family. In terms of assembly, interacts with KRT5. Phosphorylated by FAM20C in vitro.

Its subcellular location is the secreted. It localises to the extracellular space. The protein localises to the extracellular matrix. Functionally, plays a role in the biomineralization of teeth. Seems to regulate the formation of crystallites during the secretory stage of tooth enamel development. Thought to play a major role in the structural organization and mineralization of developing enamel. This is Amelogenin, X isoform (AMELX) from Bos taurus (Bovine).